Reading from the N-terminus, the 413-residue chain is Branched-chain-amino-acid aminotransferase 3, chloroplastic (413 aa).

A chloroplast-targeting transit peptide spans 1–60; sequence MERAAILPSVNQNYLLCPSRAFSTRLHSSTRNLSPPSFASIKLQHSSSSVSSNGGISLTR. K259 is modified (N6-(pyridoxal phosphate)lysine).

It belongs to the class-IV pyridoxal-phosphate-dependent aminotransferase family. Requires pyridoxal 5'-phosphate as cofactor. In terms of tissue distribution, expressed in the phloem cells.

It localises to the plastid. The protein resides in the chloroplast. It carries out the reaction L-leucine + 2-oxoglutarate = 4-methyl-2-oxopentanoate + L-glutamate. The enzyme catalyses L-isoleucine + 2-oxoglutarate = (S)-3-methyl-2-oxopentanoate + L-glutamate. The catalysed reaction is L-valine + 2-oxoglutarate = 3-methyl-2-oxobutanoate + L-glutamate. It catalyses the reaction a 2-oxocarboxylate + L-methionine = 4-methylsulfanyl-2-oxobutanoate + an L-alpha-amino acid. Its pathway is amino-acid biosynthesis; L-isoleucine biosynthesis; L-isoleucine from 2-oxobutanoate: step 4/4. It functions in the pathway amino-acid biosynthesis; L-leucine biosynthesis; L-leucine from 3-methyl-2-oxobutanoate: step 4/4. The protein operates within amino-acid biosynthesis; L-valine biosynthesis; L-valine from pyruvate: step 4/4. Inhibited by Ser- or Thr-derived imine. Functionally, converts 2-oxo acids to branched-chain amino acids. Acts on leucine, isoleucine and valine. Also involved in methionine chain elongation cycle of aliphatic glucosinolate formation. Catalyzes the conversion of 5-methylthiopentyl-2-oxo and 6-methylthiohexyl-2-oxo acids to their respective Met derivatives, homomethionine and dihomo-methionine, respectively. The protein is Branched-chain-amino-acid aminotransferase 3, chloroplastic of Arabidopsis thaliana (Mouse-ear cress).